A 418-amino-acid chain; its full sequence is Histidinol dehydrogenase (418 aa).

The NAD(+) site is built by Tyr119, Gln180, and Asn203. Positions 226, 248, and 251 each coordinate substrate. 2 residues coordinate Zn(2+): Gln248 and His251. Active-site proton acceptor residues include Glu316 and His317. Substrate contacts are provided by His317, Asp350, Glu404, and His409. Asp350 lines the Zn(2+) pocket. Residue His409 participates in Zn(2+) binding.

This sequence belongs to the histidinol dehydrogenase family. It depends on Zn(2+) as a cofactor.

The enzyme catalyses L-histidinol + 2 NAD(+) + H2O = L-histidine + 2 NADH + 3 H(+). It functions in the pathway amino-acid biosynthesis; L-histidine biosynthesis; L-histidine from 5-phospho-alpha-D-ribose 1-diphosphate: step 9/9. Its function is as follows. Catalyzes the sequential NAD-dependent oxidations of L-histidinol to L-histidinaldehyde and then to L-histidine. The polypeptide is Histidinol dehydrogenase (Staphylococcus aureus (strain MSSA476)).